The chain runs to 320 residues: Probable L,D-transpeptidase YcfS (320 aa).

The first 23 residues, 1–23, serve as a signal peptide directing secretion; the sequence is MMIKTRFSRWLTFFTFAAAVALA. The region spanning 45–90 is the LysM domain; it reads KFHVVENDGGSLEAIAKKYNVGFLALLQANPGVDPYVPRAGSVLTI. Positions 102-241 constitute a L,D-TPase catalytic domain; that stretch reads EGIVINIAEL…VTPGTKVNII (140 aa). H201 (proton donor/acceptor) is an active-site residue. The active-site Nucleophile is the C217.

This sequence belongs to the YkuD family. In terms of assembly, interacts with DsbG.

The protein localises to the periplasm. The protein operates within cell wall biogenesis; peptidoglycan biosynthesis. Responsible, at least in part, for anchoring of the major outer membrane lipoprotein (Lpp, also known as the Braun lipoprotein) to the peptidoglycan via a meso-diaminopimelyl-L-Lys- bond on the terminal residue of Lpp. The polypeptide is Probable L,D-transpeptidase YcfS (ycfS) (Escherichia coli (strain K12)).